The primary structure comprises 344 residues: Holliday junction branch migration complex subunit RuvB (344 aa).

Residues 4-184 (QDRIIDANAK…FGIVQRLEFY (181 aa)) are large ATPase domain (RuvB-L). ATP is bound by residues Arg-24, Gly-65, Lys-68, Thr-69, Thr-70, 131 to 133 (EDF), Arg-174, Tyr-184, and Arg-221. Thr-69 provides a ligand contact to Mg(2+). The segment at 185 to 255 (NIEDLTHIVE…IADLALNMLN (71 aa)) is small ATPAse domain (RuvB-S). The interval 258–344 (EHGFDHMDRR…ALKQDSLPGI (87 aa)) is head domain (RuvB-H). Residues Arg-294, Arg-313, and Arg-318 each coordinate DNA.

This sequence belongs to the RuvB family. As to quaternary structure, homohexamer. Forms an RuvA(8)-RuvB(12)-Holliday junction (HJ) complex. HJ DNA is sandwiched between 2 RuvA tetramers; dsDNA enters through RuvA and exits via RuvB. An RuvB hexamer assembles on each DNA strand where it exits the tetramer. Each RuvB hexamer is contacted by two RuvA subunits (via domain III) on 2 adjacent RuvB subunits; this complex drives branch migration. In the full resolvosome a probable DNA-RuvA(4)-RuvB(12)-RuvC(2) complex forms which resolves the HJ.

The protein localises to the cytoplasm. It carries out the reaction ATP + H2O = ADP + phosphate + H(+). The RuvA-RuvB-RuvC complex processes Holliday junction (HJ) DNA during genetic recombination and DNA repair, while the RuvA-RuvB complex plays an important role in the rescue of blocked DNA replication forks via replication fork reversal (RFR). RuvA specifically binds to HJ cruciform DNA, conferring on it an open structure. The RuvB hexamer acts as an ATP-dependent pump, pulling dsDNA into and through the RuvAB complex. RuvB forms 2 homohexamers on either side of HJ DNA bound by 1 or 2 RuvA tetramers; 4 subunits per hexamer contact DNA at a time. Coordinated motions by a converter formed by DNA-disengaged RuvB subunits stimulates ATP hydrolysis and nucleotide exchange. Immobilization of the converter enables RuvB to convert the ATP-contained energy into a lever motion, pulling 2 nucleotides of DNA out of the RuvA tetramer per ATP hydrolyzed, thus driving DNA branch migration. The RuvB motors rotate together with the DNA substrate, which together with the progressing nucleotide cycle form the mechanistic basis for DNA recombination by continuous HJ branch migration. Branch migration allows RuvC to scan DNA until it finds its consensus sequence, where it cleaves and resolves cruciform DNA. This is Holliday junction branch migration complex subunit RuvB from Saccharophagus degradans (strain 2-40 / ATCC 43961 / DSM 17024).